Consider the following 492-residue polypeptide: 5-taurinomethyluridine-[tRNA] synthase subunit GTPB3, mitochondrial (492 aa).

The transit peptide at 1 to 20 (MWRGLSALVTRPASAPLRLC) directs the protein to the mitochondrion. 5,10-methylenetetrahydrofolate is bound by residues Arg52, Glu112, and Lys152. The region spanning 249-416 (GANVVVAGPP…LLQALKTELA (168 aa)) is the TrmE-type G domain. Residues 256-263 (GPPNAGKS), 282-286 (GTTRD), 303-306 (DTAG), and 374-377 (NKSD) each bind GTP. Asn259 serves as a coordination point for K(+). Mg(2+) contacts are provided by Ser263 and Thr284. Lys492 contributes to the 5,10-methylenetetrahydrofolate binding site.

This sequence belongs to the TRAFAC class TrmE-Era-EngA-EngB-Septin-like GTPase superfamily. TrmE GTPase family. In terms of assembly, homodimer; forms a dimer in the presence of potassium. Interacts with MTO1; forms the GTPBP3-MTO1 complex composed of homodimers of GTPBP3 and MTO1. Requires K(+) as cofactor.

The protein resides in the mitochondrion. It carries out the reaction GTP + H2O = GDP + phosphate + H(+). Functionally, GTPase component of the GTPBP3-MTO1 complex that catalyzes the 5-taurinomethyluridine (taum(5)U) modification at the 34th wobble position (U34) of mitochondrial tRNAs (mt-tRNAs), which plays a role in mt-tRNA decoding and mitochondrial translation. Taum(5)U formation on mammalian mt-tRNA requires the presence of both GTPBP3-mediated GTPase activity and MTO1 catalytic activity. The polypeptide is 5-taurinomethyluridine-[tRNA] synthase subunit GTPB3, mitochondrial (Rattus norvegicus (Rat)).